The chain runs to 371 residues: Chaperone protein DnaJ (371 aa).

In terms of domain architecture, J spans 4–68 (DYYQILGVSK…QKRAAYDRFG (65 aa)). The CR-type zinc finger occupies 134-212 (GIEKNISFSS…CHGMGRYHKQ (79 aa)). 8 residues coordinate Zn(2+): Cys147, Cys150, Cys164, Cys167, Cys186, Cys189, Cys200, and Cys203. CXXCXGXG motif repeat units follow at residues 147–154 (CDTCHGTG), 164–171 (CDACGGVG), 186–193 (CHKCQGNG), and 200–207 (CKKCHGMG).

This sequence belongs to the DnaJ family. In terms of assembly, homodimer. Zn(2+) is required as a cofactor.

It localises to the cytoplasm. Its function is as follows. Participates actively in the response to hyperosmotic and heat shock by preventing the aggregation of stress-denatured proteins and by disaggregating proteins, also in an autonomous, DnaK-independent fashion. Unfolded proteins bind initially to DnaJ; upon interaction with the DnaJ-bound protein, DnaK hydrolyzes its bound ATP, resulting in the formation of a stable complex. GrpE releases ADP from DnaK; ATP binding to DnaK triggers the release of the substrate protein, thus completing the reaction cycle. Several rounds of ATP-dependent interactions between DnaJ, DnaK and GrpE are required for fully efficient folding. Also involved, together with DnaK and GrpE, in the DNA replication of plasmids through activation of initiation proteins. This chain is Chaperone protein DnaJ, found in Rickettsia felis (strain ATCC VR-1525 / URRWXCal2) (Rickettsia azadi).